The primary structure comprises 359 residues: E2F transcription factor-like E2FD (359 aa).

2 DNA-binding regions span residues Arg-13 to Gly-78 and Arg-138 to Gly-217. 2 disordered regions span residues Arg-255 to Ser-274 and Asp-288 to Arg-313. Residues Ala-293–Gly-309 are compositionally biased toward polar residues.

Belongs to the E2F/DP family. In terms of assembly, monomer. No interactions with DPA or E2FA. Preferentially expressed in proliferating tissues. Highly expressed in young stalk and young flowers. Lower expression in young leaves and mature flowers. Detected in cotyledonary vascular tissues, the shoot apical meristem, the base of trichomes, the fully developed stomata, the central root cylinder and in the columella of lateral roots but not in the primary root tips or in the leaf epidermal cells.

Its subcellular location is the nucleus. Its function is as follows. Inhibitor of E2F-dependent regulation of gene expression. Binds specifically the E2 recognition site as a monomer without interacting with DP proteins. May be up-regulating E2FA and down-regulating repressors of cell cycle progression. Promotes cell proliferation and represses cell elongation. Regulated by proteolysis via a ubiquitin-proteasome pathway. In Arabidopsis thaliana (Mouse-ear cress), this protein is E2F transcription factor-like E2FD (E2FD).